Consider the following 280-residue polypeptide: Phosphatidylglycerol--prolipoprotein diacylglyceryl transferase (280 aa).

Helical transmembrane passes span 19–39 (LSVR…YFVA), 56–76 (IIFY…VIFQ), and 90–110 (IWHG…AGVI). An a 1,2-diacyl-sn-glycero-3-phospho-(1'-sn-glycerol)-binding site is contributed by arginine 138. Transmembrane regions (helical) follow at residues 204–224 (LGET…FIEG) and 236–256 (IRVA…LIVY).

Belongs to the Lgt family.

The protein localises to the cell membrane. It carries out the reaction L-cysteinyl-[prolipoprotein] + a 1,2-diacyl-sn-glycero-3-phospho-(1'-sn-glycerol) = an S-1,2-diacyl-sn-glyceryl-L-cysteinyl-[prolipoprotein] + sn-glycerol 1-phosphate + H(+). The protein operates within protein modification; lipoprotein biosynthesis (diacylglyceryl transfer). In terms of biological role, catalyzes the transfer of the diacylglyceryl group from phosphatidylglycerol to the sulfhydryl group of the N-terminal cysteine of a prolipoprotein, the first step in the formation of mature lipoproteins. The protein is Phosphatidylglycerol--prolipoprotein diacylglyceryl transferase of Staphylococcus aureus (strain MRSA252).